Here is a 130-residue protein sequence, read N- to C-terminus: Large ribosomal subunit protein bL17 (130 aa).

The protein belongs to the bacterial ribosomal protein bL17 family. As to quaternary structure, part of the 50S ribosomal subunit. Contacts protein L32.

The protein is Large ribosomal subunit protein bL17 of Shewanella halifaxensis (strain HAW-EB4).